A 418-amino-acid polypeptide reads, in one-letter code: Gamma-glutamyl phosphate reductase (418 aa).

The protein belongs to the gamma-glutamyl phosphate reductase family.

It localises to the cytoplasm. It carries out the reaction L-glutamate 5-semialdehyde + phosphate + NADP(+) = L-glutamyl 5-phosphate + NADPH + H(+). It functions in the pathway amino-acid biosynthesis; L-proline biosynthesis; L-glutamate 5-semialdehyde from L-glutamate: step 2/2. Catalyzes the NADPH-dependent reduction of L-glutamate 5-phosphate into L-glutamate 5-semialdehyde and phosphate. The product spontaneously undergoes cyclization to form 1-pyrroline-5-carboxylate. The sequence is that of Gamma-glutamyl phosphate reductase from Desulforapulum autotrophicum (strain ATCC 43914 / DSM 3382 / VKM B-1955 / HRM2) (Desulfobacterium autotrophicum).